The sequence spans 123 residues: Putative iron-sulfur cluster insertion protein ErpA (123 aa).

Iron-sulfur cluster contacts are provided by C51, C115, and C117.

Belongs to the HesB/IscA family. Homodimer. The cofactor is iron-sulfur cluster.

Functionally, required for insertion of 4Fe-4S clusters. This Burkholderia cenocepacia (strain HI2424) protein is Putative iron-sulfur cluster insertion protein ErpA.